The following is an 85-amino-acid chain: UPF0335 protein BARBAKC583_0130 (85 aa).

The protein belongs to the UPF0335 family.

The sequence is that of UPF0335 protein BARBAKC583_0130 from Bartonella bacilliformis (strain ATCC 35685 / KC583 / Herrer 020/F12,63).